Reading from the N-terminus, the 298-residue chain is Acetylglutamate kinase (298 aa).

Residues 69 to 70 (GG), R91, and N191 contribute to the substrate site.

The protein belongs to the acetylglutamate kinase family. ArgB subfamily.

It is found in the cytoplasm. It catalyses the reaction N-acetyl-L-glutamate + ATP = N-acetyl-L-glutamyl 5-phosphate + ADP. The protein operates within amino-acid biosynthesis; L-arginine biosynthesis; N(2)-acetyl-L-ornithine from L-glutamate: step 2/4. Functionally, catalyzes the ATP-dependent phosphorylation of N-acetyl-L-glutamate. This Neisseria meningitidis serogroup C / serotype 2a (strain ATCC 700532 / DSM 15464 / FAM18) protein is Acetylglutamate kinase.